The primary structure comprises 667 residues: MTAAGLLIAIGIVYGDIGTSPLYVMKSVIAGNGGINTVGRDLIIGTISLILWTVTLLTTVQTVIIALRATNHGEGGIFALYALIRKKAAWLVWPALIGGAAILADGTLTPAVTVTTAIEGLKGLEFGKGNVPVSNQTTVLVITIVILLVLFSIQRMGTRIIGKAFGPIMLVWFAFLGVMGLINIGGNWWILQALNPYYAIKLLFSPYNKAGFAILGSIFLATTGAEALYSDVGHVGKGNIIGSWPFVFVCLSLNYFGQGVWILNNTNMHSATEINPFYAMIPENIRLASIVLATLAAIIASQALITGSFTLVAESINLKFLPRMNILYPSDERGQIYIPAVNKMLGITTIALVLFFRTSAHMEAAYGLSITISMLTTTILLYEWLVLKQGHNLANLLFVIFFSTINILFMGSSLSKFTHGGYVSLLITLLIASVMVVWYFGNKVRDQNGAGNAYVRLDEYTDMLTNLSHDDNYPTYSDNLVYMANVKYNKFIKREILYSILDKRPKRARAYWFVTVNVTNEPFTAEYAVNTFGTKNVINIQLYLGFKKQTSVNVYLRQIVHDLIKDNTIEAQPQEYTTTPGRDVGDFKFVIVNDVISPSTTLSSYKKWLVKARVQLQNLSLNPAQWFGLEFADMVIERVPLILGKQEHERIKRVAPVDYSKTSLNKK.

A run of 12 helical transmembrane segments spans residues 5–25 (GLLIAIGIVYGDIGTSPLYVM), 47–67 (ISLILWTVTLLTTVQTVIIAL), 88–108 (AAWLVWPALIGGAAILADGTL), 133–153 (VSNQTTVLVITIVILLVLFSI), 164–184 (AFGPIMLVWFAFLGVMGLINI), 210–230 (AGFAILGSIFLATTGAEALYS), 243–263 (SWPFVFVCLSLNYFGQGVWIL), 287–307 (LASIVLATLAAIIASQALITG), 336–356 (IYIPAVNKMLGITTIALVLFF), 367–387 (GLSITISMLTTTILLYEWLVL), 393–413 (LANLLFVIFFSTINILFMGSS), and 420–440 (GGYVSLLITLLIASVMVVWYF).

Belongs to the HAK/KUP transporter (TC 2.A.72) family.

It localises to the cell membrane. It catalyses the reaction K(+)(in) + H(+)(in) = K(+)(out) + H(+)(out). In terms of biological role, transport of potassium into the cell. Likely operates as a K(+):H(+) symporter. This Lactobacillus delbrueckii subsp. bulgaricus (strain ATCC 11842 / DSM 20081 / BCRC 10696 / JCM 1002 / NBRC 13953 / NCIMB 11778 / NCTC 12712 / WDCM 00102 / Lb 14) protein is Probable potassium transport system protein Kup.